A 459-amino-acid chain; its full sequence is N,N-dimethyl phenylurea N-demethylase subunit alpha (459 aa).

The 112-residue stretch at 55-166 folds into the Rieske domain; the sequence is WVFVAHETEI…VESYHGFIFT (112 aa). 4 residues coordinate [2Fe-2S] cluster: Cys-97, His-99, Cys-117, and His-120. The Fe cation site is built by His-225, His-230, and Asp-386.

This sequence belongs to the bacterial ring-hydroxylating dioxygenase alpha subunit family. As to quaternary structure, pdmA (subunit alpha) and PdmB (subunit beta) form the oxygenase component of a bacterial Rieske non-heme iron oxygenase (RO) system. [2Fe-2S] cluster serves as cofactor. Requires Fe cation as cofactor.

The catalysed reaction is a 1,1-dimethyl-3-phenylurea + 2 reduced [2Fe-2S]-[ferredoxin] + O2 + 2 H(+) = a 1-methyl-3-phenylurea + formaldehyde + 2 oxidized [2Fe-2S]-[ferredoxin] + H2O. It carries out the reaction isoproturon + 2 reduced [2Fe-2S]-[ferredoxin] + O2 + 2 H(+) = 1-methyl-3-[4-(propan-2-yl)phenyl]urea + formaldehyde + 2 oxidized [2Fe-2S]-[ferredoxin] + H2O. It catalyses the reaction chlorotoluron + 2 reduced [2Fe-2S]-[ferredoxin] + O2 + 2 H(+) = 3-(3-chloro-4-methylphenyl)-1-methylurea + formaldehyde + 2 oxidized [2Fe-2S]-[ferredoxin] + H2O. The enzyme catalyses metoxuron + 2 reduced [2Fe-2S]-[ferredoxin] + O2 + 2 H(+) = 3-(3-chloro-4-methoxylphenyl)-1-methylurea + formaldehyde + 2 oxidized [2Fe-2S]-[ferredoxin] + H2O. The catalysed reaction is monuron + 2 reduced [2Fe-2S]-[ferredoxin] + O2 + 2 H(+) = 3-(4-chlorophenyl)-1-methylurea + formaldehyde + 2 oxidized [2Fe-2S]-[ferredoxin] + H2O. It carries out the reaction diuron + 2 reduced [2Fe-2S]-[ferredoxin] + O2 + 2 H(+) = 3-(3,4-dichlorophenyl)-1-methylurea + formaldehyde + 2 oxidized [2Fe-2S]-[ferredoxin] + H2O. It catalyses the reaction fluometuron + 2 reduced [2Fe-2S]-[ferredoxin] + O2 + 2 H(+) = 3-[3-(trifluoromethyl)phenyl]-1-methylurea + formaldehyde + 2 oxidized [2Fe-2S]-[ferredoxin] + H2O. The enzyme catalyses fenuron + 2 reduced [2Fe-2S]-[ferredoxin] + O2 + 2 H(+) = 1-methyl-3-phenylurea + formaldehyde + 2 oxidized [2Fe-2S]-[ferredoxin] + H2O. It participates in xenobiotic degradation. Its activity is regulated as follows. Activity is stimulated in vitro by coexpression of a [3Fe-4S]-type ferredoxin. Functionally, part of the multicomponent N,N-dimethyl phenylurea N-demethylase responsible for the initial N-demethylation step during the bacterial metabolism of N,N-dimethyl-substituted phenylurea herbicides. Catalyzes the mono-N-demethylation of N,N-dimethyl-substituted phenylurea herbicides to their mono-N-demethylated derivatives. Is active on isoproturon (IPU), chlorotoluron, metoxuron, monoron, diuron, fluometuron and fenuron, but cannot transform the N-methoxy-N-methyl-substituted herbicides. This is N,N-dimethyl phenylurea N-demethylase subunit alpha from Sphingobium sp. (strain YBL2).